Reading from the N-terminus, the 545-residue chain is Tetrahydrocannabinolic acid synthase (545 aa).

The first 28 residues, 1–28 (MNCSAFSFWFVCKIIFFFLSFHIQISIA), serve as a signal peptide directing secretion. An intrachain disulfide couples Cys37 to Cys99. N-linked (GlcNAc...) asparagine glycans are attached at residues Asn65 and Asn89. Residues 77–251 (TTPKPLVIVT…AAWKIKLVAV (175 aa)) enclose the FAD-binding PCMH-type domain. FAD-binding positions include 109 to 115 (TRSGGHD) and Ser120. A cross-link (6-(S-cysteinyl)-8alpha-(pros-histidyl)-FAD (His-Cys)) is located at residues 114–176 (HDAEGMSYIS…ENLSFPGGYC (63 aa)). N-linked (GlcNAc...) asparagine glycosylation occurs at Asn168. Residues Cys176, 180-184 (GVGGH), Tyr190, Glu236, and Ile241 each bind FAD. His292 contacts cannabigerolate. N-linked (GlcNAc...) asparagine glycosylation is found at Asn297, Asn305, and Asn329. Residues Tyr417 and Glu442 each coordinate cannabigerolate. Asn467 carries N-linked (GlcNAc...) asparagine glycosylation. 481 to 483 (YLN) lines the FAD pocket. Tyr484 functions as the Proton acceptor in the catalytic mechanism. The N-linked (GlcNAc...) asparagine glycan is linked to Asn499.

Belongs to the oxygen-dependent FAD-linked oxidoreductase family. Monomer. Requires FAD as cofactor. In terms of processing, glycosylated when produced in a heterologous system. The deglycosylated THCA synthase has more catalytic activity than the glycosylated form. The FAD cofactor is bound via a bicovalent 6-S-cysteinyl, 8alpha-N1-histidyl FAD linkage. As to expression, expressed in the secretory cells of glandular trichomes.

The protein localises to the secreted. It is found in the extracellular space. The protein resides in the apoplast. The enzyme catalyses cannabigerolate + O2 = Delta(9)-tetrahydrocannabinolate + H2O2. It functions in the pathway secondary metabolite biosynthesis; terpenoid biosynthesis. Its activity is regulated as follows. Inhibited by Hg(2+). In terms of biological role, oxidoreductase involved in the biosynthesis of cannabinoids-related terpenophenolic natural products, which have pharmacological activity. Catalyzes the oxidative cyclization of the monoterpene moiety in cannabigerolic acid (CBGA), producing delta(9)-tetrahydrocannabinolate (THCA), the major cannabioid in drug-type Cannabis plants. Can also use cannabinerolic acid as substrate, but not cannabigerol or cannabinerol. This chain is Tetrahydrocannabinolic acid synthase, found in Cannabis sativa (Hemp).